An 86-amino-acid polypeptide reads, in one-letter code: Cell division topological specificity factor (86 aa).

This sequence belongs to the MinE family.

In terms of biological role, prevents the cell division inhibition by proteins MinC and MinD at internal division sites while permitting inhibition at polar sites. This ensures cell division at the proper site by restricting the formation of a division septum at the midpoint of the long axis of the cell. The chain is Cell division topological specificity factor from Shewanella frigidimarina (strain NCIMB 400).